The primary structure comprises 590 residues: MHPIKLCARSPRPSSKKRKRPAAAAATPPESEPEPVHNTAACNSEGENNATGKRREHNNKKMKEEKSKRKKKQGEGKKGSGILTDKLFSDLPISDLTANAIRDMNYTHLTEIQARSIPPLMLGSDVMASAKTGSGKTLAFLIPAIELLCRLRFSPRNGTGVIVLCPTRELAIQTHNVAKELMRYHSQTLGYVIGGIDLRGEAEQLAKGINVLVATPGRLLDHMQKTKSFKYECLKCLIIDEADRILEQNFEEQMKQIFKLLPRQGRQTVLFSATQTEKVEDFAKLTFGSKEERQRTLVYVGVDDHESKATVEGLKQGYCVIPSERRFLVLYAFLKKALSEKTKVMVFFSSCNSVKFHAQLLNFIQIECYDIHGQLKQHQRTSTFFKFHKAEHGILLCTNVAARGLDIPDVDYIVQYDPPDETKDYIHRVGRTARGDNGKGSAILFLLPKELQLLIHLKAANISVSEYVFRQELVPKLQPYLHYDSSFEQEKIVGGNYILNRSAKEAYKSYLLAYKSHSMKDIFAIHQLDLTSVAASFCFSEPPKVNLDLESSASKHRKKRNVNTGRRHGIGPSNPYGRKGSDDRRQFARF.

The interval 1–81 (MHPIKLCARS…KQGEGKKGSG (81 aa)) is disordered. Over residues 40–51 (AACNSEGENNAT) the composition is skewed to polar residues. A compositionally biased stretch (basic and acidic residues) spans 59–78 (NKKMKEEKSKRKKKQGEGKK). A Q motif motif is present at residues 86 to 114 (KLFSDLPISDLTANAIRDMNYTHLTEIQA). Residues 117-293 (IPPLMLGSDV…KLTFGSKEER (177 aa)) form the Helicase ATP-binding domain. ATP is bound at residue 130-137 (AKTGSGKT). Positions 240–243 (DEAD) match the DEAD box motif. One can recognise a Helicase C-terminal domain in the interval 329 to 481 (VLYAFLKKAL…ELVPKLQPYL (153 aa)). Residues 549 to 590 (LESSASKHRKKRNVNTGRRHGIGPSNPYGRKGSDDRRQFARF) form a disordered region. The span at 554–569 (SKHRKKRNVNTGRRHG) shows a compositional bias: basic residues. A compositionally biased stretch (basic and acidic residues) spans 579-590 (KGSDDRRQFARF).

This sequence belongs to the DEAD box helicase family. DDX18/HAS1 subfamily.

The catalysed reaction is ATP + H2O = ADP + phosphate + H(+). The sequence is that of Putative DEAD-box ATP-dependent RNA helicase 51 from Oryza sativa subsp. japonica (Rice).